Reading from the N-terminus, the 578-residue chain is 2-succinyl-5-enolpyruvyl-6-hydroxy-3-cyclohexene-1-carboxylate synthase (578 aa).

This sequence belongs to the TPP enzyme family. MenD subfamily. As to quaternary structure, homodimer. Mg(2+) serves as cofactor. Requires Mn(2+) as cofactor. The cofactor is thiamine diphosphate.

It catalyses the reaction isochorismate + 2-oxoglutarate + H(+) = 5-enolpyruvoyl-6-hydroxy-2-succinyl-cyclohex-3-ene-1-carboxylate + CO2. It functions in the pathway quinol/quinone metabolism; 1,4-dihydroxy-2-naphthoate biosynthesis; 1,4-dihydroxy-2-naphthoate from chorismate: step 2/7. It participates in quinol/quinone metabolism; menaquinone biosynthesis. Catalyzes the thiamine diphosphate-dependent decarboxylation of 2-oxoglutarate and the subsequent addition of the resulting succinic semialdehyde-thiamine pyrophosphate anion to isochorismate to yield 2-succinyl-5-enolpyruvyl-6-hydroxy-3-cyclohexene-1-carboxylate (SEPHCHC). The protein is 2-succinyl-5-enolpyruvyl-6-hydroxy-3-cyclohexene-1-carboxylate synthase of Bacillus velezensis (strain DSM 23117 / BGSC 10A6 / LMG 26770 / FZB42) (Bacillus amyloliquefaciens subsp. plantarum).